The following is a 1088-amino-acid chain: RNA-directed RNA polymerase (1088 aa).

The RdRp catalytic domain occupies 501 to 687 (LSYGDVTRFL…AKRYIAGGKI (187 aa)).

This sequence belongs to the reoviridae RNA-directed RNA polymerase family. In terms of assembly, interacts with VP3 (Potential). Interacts with VP2; this interaction activates VP1. Interacts with NSP5; this interaction is probably necessary for the formation of functional virus factories. Interacts with NSP2; this interaction is weak. Mg(2+) is required as a cofactor.

The protein localises to the virion. The catalysed reaction is RNA(n) + a ribonucleoside 5'-triphosphate = RNA(n+1) + diphosphate. Functionally, RNA-directed RNA polymerase that is involved in both transcription and genome replication. Together with VP3 capping enzyme, forms an enzyme complex positioned near the channels situated at each of the five-fold vertices of the core. Following infection, the outermost layer of the virus is lost, leaving a double-layered particle (DLP) made up of the core and VP6 shell. VP1 then catalyzes the transcription of fully conservative plus-strand genomic RNAs that are extruded through the DLP's channels into the cytoplasm where they function as mRNAs for translation of viral proteins. One copy of each of the viral (+)RNAs is also recruited during core assembly, together with newly synthesized polymerase complexes and VP2. The polymerase of these novo-formed particles catalyzes the synthesis of complementary minus-strands leading to dsRNA formation. To do so, the polymerase specifically recognizes and binds 4 bases 5'-UGUG-3' in the conserved 3'-sequence of plus-strand RNA templates. VP2 presumably activates the autoinhibited VP1-RNA complex to coordinate packaging and genome replication. Once dsRNA synthesis is complete, the polymerase switches to the transcriptional mode, thus providing secondary transcription. In Homo sapiens (Human), this protein is RNA-directed RNA polymerase.